We begin with the raw amino-acid sequence, 437 residues long: Enolase superfamily member DDB_G0284701 (437 aa).

Lys217 serves as the catalytic Proton acceptor. Asp251, Glu279, and Asp321 together coordinate Mn(2+). The active-site Proton donor is the Asp395.

The protein belongs to the mandelate racemase/muconate lactonizing enzyme family.

The protein is Enolase superfamily member DDB_G0284701 of Dictyostelium discoideum (Social amoeba).